A 408-amino-acid chain; its full sequence is Peptidase T (408 aa).

His78 contributes to the Zn(2+) binding site. The active site involves Asp80. A Zn(2+)-binding site is contributed by Asp140. Glu174 acts as the Proton acceptor in catalysis. Zn(2+) contacts are provided by Glu175, Asp197, and His379.

Belongs to the peptidase M20B family. Zn(2+) serves as cofactor.

The protein resides in the cytoplasm. The catalysed reaction is Release of the N-terminal residue from a tripeptide.. Its function is as follows. Cleaves the N-terminal amino acid of tripeptides. This Staphylococcus aureus (strain MRSA252) protein is Peptidase T.